Consider the following 576-residue polypeptide: Mycobactin import ATP-binding/permease protein IrtB (576 aa).

Residues 1–25 (MIRTLIALVPADKRGTLGLYTVLTV) lie on the Cytoplasmic side of the membrane. Residues 19–299 (LYTVLTVLSV…LSELTPAIES (281 aa)) enclose the ABC transmembrane type-1 domain. Residues 26 to 46 (LSVVIRAAGTVLLVPLVAALF) form a helical membrane-spanning segment. Over 47–52 (GDTPQD) the chain is Periplasmic. Residues 53-73 (AWPWLGWLTAATAAGWIVDTT) traverse the membrane as a helical segment. Residues 74–131 (TSRLGFDLGFAVLDHTQHDVADRMPNIRLDWLTAENTATARAAIASTGPELVGLVVNL) lie on the Cytoplasmic side of the membrane. 2 consecutive transmembrane segments (helical) span residues 132–152 (LTPLIGAVLLPAAIAVALVAV) and 153–173 (SPPLGLAALAGVVVLLGAMWA). Over 174–241 (SNRLSRKADT…RLLAMQIPGQ (68 aa)) the chain is Cytoplasmic. Residues 242–262 (LLFSLASQLALILLAGMATWL) form a helical membrane-spanning segment. Over 263 to 267 (TVRGE) the chain is Periplasmic. The helical transmembrane segment at 268–288 (LSVPEAVAMIVVVARYLEPFT) threads the bilayer. The Cytoplasmic segment spans residues 289 to 576 (SLSELTPAIE…HEAADWQITH (288 aa)). Positions 332-565 (IEFDCVTFGY…GGRFDEFWRR (234 aa)) constitute an ABC transporter domain. 364-371 (GPSGSGKS) contributes to the ATP binding site.

Belongs to the ABC transporter superfamily. Siderophore-Fe(3+) uptake transporter (SIUT) (TC 3.A.1.21) family. As to quaternary structure, forms a heterodimer with IrtA.

It localises to the cell inner membrane. Part of the ABC transporter complex IrtAB involved in the import of iron-bound mycobactin (Fe-MBT) and carboxymycobactin (Fe-cMBT). Has a preference for Fe-MBT over Fe-cMBT. Transmembrane domains (TMD) form a pore in the membrane and the ATP-binding domain (NBD) is responsible for energy generation. In Mycolicibacterium smegmatis (strain ATCC 700084 / mc(2)155) (Mycobacterium smegmatis), this protein is Mycobactin import ATP-binding/permease protein IrtB.